A 201-amino-acid chain; its full sequence is tRNA (guanine-N(7)-)-methyltransferase (201 aa).

S-adenosyl-L-methionine is bound by residues Glu-33, Glu-58, Asp-85, and Asp-106. Asp-106 is a catalytic residue. Residues Lys-110, Asp-142, and 180 to 183 (TTYE) each bind substrate.

It belongs to the class I-like SAM-binding methyltransferase superfamily. TrmB family.

It catalyses the reaction guanosine(46) in tRNA + S-adenosyl-L-methionine = N(7)-methylguanosine(46) in tRNA + S-adenosyl-L-homocysteine. It participates in tRNA modification; N(7)-methylguanine-tRNA biosynthesis. Its function is as follows. Catalyzes the formation of N(7)-methylguanine at position 46 (m7G46) in tRNA. This chain is tRNA (guanine-N(7)-)-methyltransferase, found in Mesomycoplasma hyopneumoniae (strain 232) (Mycoplasma hyopneumoniae).